Consider the following 60-residue polypeptide: Hemocyte defensin Cg-Defh1 (60 aa).

The N-terminal stretch at 1–17 (LFTLVVLLMVSADMAFA) is a signal peptide. Beta-D-GlcNAc-(1-&gt;4)-Mur2Ac(oyl-L-Ala-gamma-D-Glu-L-Lys-D-Ala-D-Ala)-di-trans,octa-cis-undecaprenyl diphosphate-binding residues include Phe19, Gly20, and Cys21. Disulfide bonds link Cys21-Cys42, Cys28-Cys51, Cys32-Cys53, and Cys37-Cys56. The tract at residues 22–25 (PRDQ) is binds to membrane interface. His31 lines the beta-D-GlcNAc-(1-&gt;4)-Mur2Ac(oyl-L-Ala-gamma-D-Glu-L-Lys-D-Ala-D-Ala)-di-trans,octa-cis-undecaprenyl diphosphate pocket. Residues 43–49 (DAVTLWL) form a binds to membrane interface region. Beta-D-GlcNAc-(1-&gt;4)-Mur2Ac(oyl-L-Ala-gamma-D-Glu-L-Lys-D-Ala-D-Ala)-di-trans,octa-cis-undecaprenyl diphosphate is bound at residue Cys51.

This sequence belongs to the invertebrate defensin family. As to expression, expressed in hemocytes.

It localises to the secreted. It is found in the target cell membrane. Antibacterial peptide mostly active against Gram-positive bacteria. It acts by selectively inhibiting peptidoglycan biosynthesis through complex formation with the cell wall precursor lipid II (1:1 molar ratio) thus inhibiting cell wall synthesis. It does not disrupt cell membranes. Is noticeably less potent than Cg-Defh2 and Cg-Defm. Shows no or limited activities against Gram-negative bacteria. The polypeptide is Hemocyte defensin Cg-Defh1 (Magallana gigas (Pacific oyster)).